Reading from the N-terminus, the 714-residue chain is FERM domain-containing protein 7 (714 aa).

Residues 2 to 282 (LHLKVQFLDD…EYHAFFRLSE (281 aa)) form the FERM domain. Positions 537-558 (NIRMKSFQQDLQVLQEAIARTS) form a coiled coil.

As to expression, expressed in liver, kidney, pancreas and at low levels in brain and heart. Expressed in embryonic brain and developing neural retina.

It is found in the cell projection. It localises to the neuron projection. The protein localises to the growth cone. Plays a role in neurite development, may be through the activation of the GTPase RAC1. Plays a role in the control of eye movement and gaze stability. This chain is FERM domain-containing protein 7 (FRMD7), found in Homo sapiens (Human).